Reading from the N-terminus, the 88-residue chain is Fe-S protein maturation auxiliary factor SufT (88 aa).

The protein belongs to the MIP18 family.

Its function is as follows. Involved in the maturation of iron-sulfur (Fe-S) proteins. May function as a Fe-S cluster carrier. Is required for S.aureus growth under conditions that impose a high demand for lipoic acid, likely via a role in the maturation of the lipoate synthase LipA. Is non-essential for growth in conditions that impose a low demand for lipoic acid or Fe-S clusters, such as fermentative growth. Also seems to be involved in the maturation of AcnA, LeuCD and IlvD proteins, that utilize Fe-S cluster cofactors, and its role increases under conditions of high-demand for Fe-S clusters (respiratory growth). Is not involved in the repair of Fe-S clusters damaged by reactive oxygen species or in the physical protection of Fe-S clusters from oxidants. Displays synergy with the Fe-S cluster carrier Nfu. The protein is Fe-S protein maturation auxiliary factor SufT of Staphylococcus aureus (strain USA300).